Consider the following 215-residue polypeptide: Adenylate kinase (215 aa).

An ATP-binding site is contributed by 10–15; it reads GCGKGT. The NMP stretch occupies residues 30-59; the sequence is STGDIFRQTIDQKGPYWEELKSYISKGLLV. Residues Thr31, Arg36, 57–59, and Gln91 each bind AMP; that span reads LLV. The interval 120-157 is LID; sequence GRRICSKCKRIYNIHYSAPKKEDICDDDGEFLIQRKDD. Residue Arg121 participates in ATP binding. 2 residues coordinate Zn(2+): Cys124 and Cys127. Position 130–131 (130–131) interacts with ATP; the sequence is IY. Residues Cys144 and Asp147 each coordinate Zn(2+). Positions 154 and 165 each coordinate AMP.

It belongs to the adenylate kinase family. Monomer.

Its subcellular location is the cytoplasm. It catalyses the reaction AMP + ATP = 2 ADP. It participates in purine metabolism; AMP biosynthesis via salvage pathway; AMP from ADP: step 1/1. Functionally, catalyzes the reversible transfer of the terminal phosphate group between ATP and AMP. Plays an important role in cellular energy homeostasis and in adenine nucleotide metabolism. The chain is Adenylate kinase from Malacoplasma penetrans (strain HF-2) (Mycoplasma penetrans).